The chain runs to 60 residues: Large ribosomal subunit protein uL30 (60 aa).

This sequence belongs to the universal ribosomal protein uL30 family. Part of the 50S ribosomal subunit.

This Streptococcus thermophilus (strain CNRZ 1066) protein is Large ribosomal subunit protein uL30.